Here is a 192-residue protein sequence, read N- to C-terminus: Phosphoheptose isomerase (192 aa).

The SIS domain occupies 34–192 (VVDAYRAGNK…VERELFLKGN (159 aa)). Position 49-51 (49-51 (NGG)) interacts with substrate. Residues histidine 58 and glutamate 62 each contribute to the Zn(2+) site. Substrate is bound by residues glutamate 62, 91-92 (ND), 117-119 (STS), serine 122, and glutamine 169. Zn(2+) contacts are provided by glutamine 169 and histidine 177.

Belongs to the SIS family. GmhA subfamily. Homotetramer. Zn(2+) is required as a cofactor.

It localises to the cytoplasm. It carries out the reaction 2 D-sedoheptulose 7-phosphate = D-glycero-alpha-D-manno-heptose 7-phosphate + D-glycero-beta-D-manno-heptose 7-phosphate. Its pathway is carbohydrate biosynthesis; D-glycero-D-manno-heptose 7-phosphate biosynthesis; D-glycero-alpha-D-manno-heptose 7-phosphate and D-glycero-beta-D-manno-heptose 7-phosphate from sedoheptulose 7-phosphate: step 1/1. Catalyzes the isomerization of sedoheptulose 7-phosphate in D-glycero-D-manno-heptose 7-phosphate. In Geobacter sp. (strain M21), this protein is Phosphoheptose isomerase.